The following is an 813-amino-acid chain: Origin of replication complex subunit 1B (813 aa).

The interval 1-109 is disordered; sequence MASTPRAKTF…TPKKKKKIDS (109 aa). Positions 11-21 are enriched in polar residues; sequence KSPTKTPSNIY. Residues 27–41 show a composition bias toward low complexity; the sequence is SPSSTSHTPQTPETH. Basic residues predominate over residues 43–52; the sequence is PLRRSARHVS. Residues 83–90 carry the Nuclear localization signal motif; sequence PRKPTTDV. The segment at 163–187 is histone H3 binding; the sequence is DPEIEDCQICFKSDTNIMIECDDCL. The PHD-type zinc finger occupies 166–215; that stretch reads IEDCQICFKSDTNIMIECDDCLGGFHLKCLKPPLKEVPEGDWICQFCEVK. Zn(2+)-binding residues include Cys169, Cys172, Cys183, Cys186, His191, and Cys194. The tract at residues 203-207 is histone H3 binding; sequence PEGDW. Residues Cys209 and Cys212 each contribute to the Zn(2+) site. The region spanning 226–344 is the BAH domain; sequence PKPPEGKKLA…VHWRSFKRLA (119 aa). The interval 319 to 324 is histone H3 binding; sequence ASNDGD. Positions 349–372 are disordered; that stretch reads GDSDSDQEWNGRKEEEVDDSDEEM. Residues 436–803 are necessary and sufficient for ORC complex assembly; it reads PKSLPCRSKE…DDVAFALKDN (368 aa). 471–479 is a binding site for ATP; sequence GVPGTGKTI. The Mg(2+) site is built by Asp561 and Glu562. Glu562, Asn595, and Arg660 together coordinate ATP.

The protein belongs to the ORC1 family. Component of the origin recognition complex (ORC) composed of at least ORC1 (ORC1A or ORC1B), ORC2, ORC3, ORC4, ORC5 and ORC6. ORC is regulated in a cell-cycle and development dependent manner. It is sequentially assembled at the exit from anaphase of mitosis and disassembled as cells enter S phase. Interacts directly with ORC2 and ORC5. Binds mostly unmodified histone H3, and, with lower efficiency, H3K4me1 H3K4me2 and H3K4me3. Follow a cell-cycle regulation with a peak at the G1/S-phase. Mostly expressed in flower buds, and, to a lower exent, in roots, leaves and stems.

It is found in the nucleus. Essential protein required for ovules fertilization. Component of the origin recognition complex (ORC) that binds origins of replication. It has a role in both chromosomal replication and mating type transcriptional silencing. Binds to the ARS consensus sequence (ACS) of origins of replication. H3K4me3 effector that positively regulates the transcription of a subset of genes. The sequence is that of Origin of replication complex subunit 1B from Arabidopsis thaliana (Mouse-ear cress).